The following is a 51-amino-acid chain: Large ribosomal subunit protein eL39 (51 aa).

This sequence belongs to the eukaryotic ribosomal protein eL39 family. In terms of assembly, part of the 50S ribosomal subunit.

The sequence is that of Large ribosomal subunit protein eL39 from Pyrococcus furiosus (strain ATCC 43587 / DSM 3638 / JCM 8422 / Vc1).